Here is a 258-residue protein sequence, read N- to C-terminus: Imidazole glycerol phosphate synthase subunit HisF (258 aa).

Catalysis depends on residues Asp11 and Asp130.

This sequence belongs to the HisA/HisF family. As to quaternary structure, heterodimer of HisH and HisF.

The protein resides in the cytoplasm. The enzyme catalyses 5-[(5-phospho-1-deoxy-D-ribulos-1-ylimino)methylamino]-1-(5-phospho-beta-D-ribosyl)imidazole-4-carboxamide + L-glutamine = D-erythro-1-(imidazol-4-yl)glycerol 3-phosphate + 5-amino-1-(5-phospho-beta-D-ribosyl)imidazole-4-carboxamide + L-glutamate + H(+). It functions in the pathway amino-acid biosynthesis; L-histidine biosynthesis; L-histidine from 5-phospho-alpha-D-ribose 1-diphosphate: step 5/9. IGPS catalyzes the conversion of PRFAR and glutamine to IGP, AICAR and glutamate. The HisF subunit catalyzes the cyclization activity that produces IGP and AICAR from PRFAR using the ammonia provided by the HisH subunit. This Bradyrhizobium sp. (strain BTAi1 / ATCC BAA-1182) protein is Imidazole glycerol phosphate synthase subunit HisF.